The following is a 244-amino-acid chain: MLQCLFFVMDPVFLSEITVELVKHSASDSDVVFSARVSTLGSFVAVTDCLSNRDIGLITFLMRERHGSPFEHSHMTFRISAPIFVFREFMRHRIASYNEESGRYKNLDPVFYIPDEKRKLVQIGAPGAYKFEEGTSEQYGLLIEEMKELSLAAYDTYKRLLACGIAREVARMILPLNLYSTMYVTINARSLMNFLSVRTSRANSAFHSYPQREIELCADRIEEIWKGLMPETHAAFEKQGRVAP.

The 223-residue stretch at 17 to 239 (ITVELVKHSA…PETHAAFEKQ (223 aa)) folds into the ThyX domain. FAD-binding positions include S68, 91-93 (RHR), and E99. Residues 88-91 (EFMR), 99-103 (EESGR), and R171 contribute to the dUMP site. The ThyX motif motif lies at 91–101 (RHRIASYNEES). Residues 187–189 (NAR) and N193 contribute to the FAD site. Position 198 (R198) interacts with dUMP. R198 (involved in ionization of N3 of dUMP, leading to its activation) is an active-site residue.

This sequence belongs to the thymidylate synthase ThyX family. As to quaternary structure, homotetramer. FAD is required as a cofactor.

It catalyses the reaction dUMP + (6R)-5,10-methylene-5,6,7,8-tetrahydrofolate + NADPH + H(+) = dTMP + (6S)-5,6,7,8-tetrahydrofolate + NADP(+). The protein operates within pyrimidine metabolism; dTTP biosynthesis. Catalyzes the reductive methylation of 2'-deoxyuridine-5'-monophosphate (dUMP) to 2'-deoxythymidine-5'-monophosphate (dTMP) while utilizing 5,10-methylenetetrahydrofolate (mTHF) as the methyl donor, and NADPH and FADH(2) as the reductant. This is Flavin-dependent thymidylate synthase from Tropheryma whipplei (strain Twist) (Whipple's bacillus).